A 293-amino-acid chain; its full sequence is uncharacterized protein (293 aa).

Disordered regions lie at residues 1 to 95 (MFLR…KDKA) and 268 to 293 (EETA…GRAL). Phosphoserine is present on residues Ser-34, Ser-35, and Ser-89. Composition is skewed to basic and acidic residues over residues 85–95 (KRMDSLKKDKA) and 277–286 (GQGKEAKEQT).

This is an uncharacterized protein from Rattus norvegicus (Rat).